We begin with the raw amino-acid sequence, 334 residues long: D-fructose 1,6-bisphosphatase class 2/sedoheptulose 1,7-bisphosphatase (334 aa).

4 residues coordinate Mn(2+): Asp33, Glu57, Asp85, and Glu88. Residues 88–90 (EGT), Tyr119, 164–166 (RAR), and 186–188 (DGD) contribute to the substrate site. Glu213 is a Mn(2+) binding site.

Belongs to the FBPase class 2 family. Homotetramer. Mn(2+) is required as a cofactor.

It catalyses the reaction beta-D-fructose 1,6-bisphosphate + H2O = beta-D-fructose 6-phosphate + phosphate. The enzyme catalyses D-sedoheptulose 1,7-bisphosphate + H2O = D-sedoheptulose 7-phosphate + phosphate. The protein operates within carbohydrate biosynthesis; Calvin cycle. Functionally, catalyzes the hydrolysis of fructose 1,6-bisphosphate (Fru 1,6-P2) and sedoheptulose 1,7-bisphosphate (Sed 1,7-P2) to fructose 6-phosphate and sedoheptulose 7-phosphate, respectively. This is D-fructose 1,6-bisphosphatase class 2/sedoheptulose 1,7-bisphosphatase from Prochlorococcus marinus (strain MIT 9303).